The chain runs to 383 residues: Acetylornithine deacetylase (383 aa).

His80 is a binding site for Zn(2+). The active site involves Asp82. Asp112 contacts Zn(2+). Residue Glu144 is part of the active site. Zn(2+) contacts are provided by Glu145, Glu169, and His355.

Belongs to the peptidase M20A family. ArgE subfamily. In terms of assembly, homodimer. It depends on Zn(2+) as a cofactor. Requires Co(2+) as cofactor. The cofactor is glutathione.

It is found in the cytoplasm. The catalysed reaction is N(2)-acetyl-L-ornithine + H2O = L-ornithine + acetate. It functions in the pathway amino-acid biosynthesis; L-arginine biosynthesis; L-ornithine from N(2)-acetyl-L-ornithine (linear): step 1/1. Functionally, catalyzes the hydrolysis of the amide bond of N(2)-acetylated L-amino acids. Cleaves the acetyl group from N-acetyl-L-ornithine to form L-ornithine, an intermediate in L-arginine biosynthesis pathway, and a branchpoint in the synthesis of polyamines. The polypeptide is Acetylornithine deacetylase (Shigella dysenteriae serotype 1 (strain Sd197)).